We begin with the raw amino-acid sequence, 121 residues long: Protein ripply2.1 (121 aa).

Residues Met1–His69 are disordered. A WRPW motif motif is present at residues Trp29–Trp32. Polar residues predominate over residues His39–His57. The tract at residues His69–Tyr104 is ripply homology domain.

The protein belongs to the ripply family. As to expression, expressed in the presomitic mesoderm (PSM) in the anterior halves of somitomeres S-0, S-I and S-II and in the newly formed somites.

The protein resides in the nucleus. Its function is as follows. Required during somitogenesis to regulate somite differentiation and the positioning of the presomitic mesoderm-front. Represses the expression of genes involved in somite segmentation by acting with the corepressor tle4 to down-regulate the transcriptional activity of tbx6. Also regulates retinoic acid signaling during somitogenesis and is necessary for the expression of aldh1a2/raldh2. This Xenopus laevis (African clawed frog) protein is Protein ripply2.1 (ripply2.1).